We begin with the raw amino-acid sequence, 108 residues long: UPF0060 membrane protein Nwi_1459 (108 aa).

A run of 4 helical transmembrane segments spans residues 5–25, 31–51, 61–81, and 88–108; these read AAYV…WAWL, VWWL…LTLV, AAYG…VEGI, and LAGA…PHEI.

This sequence belongs to the UPF0060 family.

It localises to the cell inner membrane. The protein is UPF0060 membrane protein Nwi_1459 of Nitrobacter winogradskyi (strain ATCC 25391 / DSM 10237 / CIP 104748 / NCIMB 11846 / Nb-255).